The primary structure comprises 131 residues: Single-stranded DNA-binding protein 1 (131 aa).

The region spanning 1–103 is the SSB domain; the sequence is MYNKVIAIGR…VLCQSFQLLE (103 aa).

Homotetramer.

In Streptococcus pyogenes serotype M6 (strain ATCC BAA-946 / MGAS10394), this protein is Single-stranded DNA-binding protein 1 (ssb1).